A 132-amino-acid chain; its full sequence is Arginine decarboxylase proenzyme (132 aa).

Residue S70 is the Schiff-base intermediate with substrate; via pyruvic acid of the active site. S70 is modified (pyruvic acid (Ser); by autocatalysis). H75 acts as the Proton acceptor; for processing activity in catalysis. C90 (proton donor; for catalytic activity) is an active-site residue.

It belongs to the prokaryotic AdoMetDC family. Type 1 subfamily. As to quaternary structure, heterooctamer of four alpha and four beta chains arranged as a tetramer of alpha/beta heterodimers. The cofactor is pyruvate. In terms of processing, is synthesized initially as an inactive proenzyme. Formation of the active enzyme involves a self-maturation process in which the active site pyruvoyl group is generated from an internal serine residue via an autocatalytic post-translational modification. Two non-identical subunits are generated from the proenzyme in this reaction, and the pyruvate is formed at the N-terminus of the alpha chain, which is derived from the carboxyl end of the proenzyme. The post-translation cleavage follows an unusual pathway, termed non-hydrolytic serinolysis, in which the side chain hydroxyl group of the serine supplies its oxygen atom to form the C-terminus of the beta chain, while the remainder of the serine residue undergoes an oxidative deamination to produce ammonia and the pyruvoyl group blocking the N-terminus of the alpha chain.

It carries out the reaction L-arginine + H(+) = agmatine + CO2. The protein operates within amine and polyamine biosynthesis; agmatine biosynthesis; agmatine from L-arginine: step 1/1. Specifically catalyzes the decarboxylation of L-arginine to agmatine. Has no S-adenosylmethionine decarboxylase (AdoMetDC) activity. The chain is Arginine decarboxylase proenzyme from Aeropyrum pernix (strain ATCC 700893 / DSM 11879 / JCM 9820 / NBRC 100138 / K1).